A 277-amino-acid polypeptide reads, in one-letter code: 3-methyl-2-oxobutanoate hydroxymethyltransferase (277 aa).

Mg(2+) contacts are provided by D53 and D96. 3-methyl-2-oxobutanoate contacts are provided by residues 53-54 (DS), D96, and K126. A Mg(2+)-binding site is contributed by E128. E195 (proton acceptor) is an active-site residue.

It belongs to the PanB family. Homodecamer; pentamer of dimers. Mg(2+) serves as cofactor.

It localises to the cytoplasm. The catalysed reaction is 3-methyl-2-oxobutanoate + (6R)-5,10-methylene-5,6,7,8-tetrahydrofolate + H2O = 2-dehydropantoate + (6S)-5,6,7,8-tetrahydrofolate. The protein operates within cofactor biosynthesis; (R)-pantothenate biosynthesis; (R)-pantoate from 3-methyl-2-oxobutanoate: step 1/2. Functionally, catalyzes the reversible reaction in which hydroxymethyl group from 5,10-methylenetetrahydrofolate is transferred onto alpha-ketoisovalerate to form ketopantoate. The protein is 3-methyl-2-oxobutanoate hydroxymethyltransferase of Chlorobaculum parvum (strain DSM 263 / NCIMB 8327) (Chlorobium vibrioforme subsp. thiosulfatophilum).